We begin with the raw amino-acid sequence, 1041 residues long: MRADLSTIQQTLTPEAAAALARAMDEAGRRRHGQTTPLHVAAALLAAPAGLLRQACARAASAAGVGGGGGAAAGAGAGAHPLHCRALELCFSVALDRLPAAAAAAAAAHGAGASPPVSNALVAALKRAQAQQRRGCPEAAQQPLLAVKVELEQLVLSILDDPSVSRVMREASFSSAAVKSIIEQSLSAPSPCPSAAASTTTAGPGPLSPSPSPLPRAGAANAYLNPRLAAAAAVASGGGGGGGDDARKVIDVMLKPTRRNPVLVGDAGPDAVLKEAIRRIPTAGFPALAGAKVLPLEAELAKLAGDKAAMAARIGDLGAVVERLLGEHGGVVLDLGDLKWLVDGPAAAASEGGKAAVAEMGRLLRRFGRAGVWAVCTAACTTYLRCKVYHPGMEAEWDLHAVPIARGGAPIAAAAAGSALRPGGSGILNSSMGMLSPALRPMPVTPTALRWPPPGSDQSPAAKPAMCLLCKGSYERELAKLEAEQTDKPASRPEAAKPGLPHWLQLSNDQNKAKEQELKLKRSKDELERKWRETCARIHSACPMAPALSVPLATFTPRPPVEPKLGVARGAAVPTLKMNPSWEKPSVAPTLELRKSPPASPVKTDLVLCRLDPGTNPAVENEQKESCEGLTALQKAKIAGISDIESFKRLLKGLTEKVSWQSDAASAIAAVVIQCRSGSGKRRNVGTRGDMWLLFVGPDQAGKRKMVNALSELMANTRPVVVNFGGDSRLGRVGNDGPNMGFWGKTALDRVTEAVRQNPFSVIVLEGIDQVDVVVHGKIKRAMETGRLPDSRGREVSLGNVIFVLTTNWVPEELKGSNVETLLRGEERMLESTSSSWQLELSIGDKQVKHRADWLCDDVRPAKLAKELSSSHGLSLDLNLAVGALDDTEGSHNSSDVSVEQEQEKGQLAVKRSTPAPGSDILELVDDAIVFRPVDFTPFRKTVTDCISAKFESVMGSSSSFRIDEDAVDWMVGSVWLTDEKIEDWAEKVLKPSIERLWHNVKHDSGRSIIRLTAVAAKALPRWGGGREGLPVAVTIAIDGM.

The Clp R domain maps to 8–188; that stretch reads IQQTLTPEAA…KSIIEQSLSA (181 aa). Repeat regions lie at residues 12-98 and 117-188; these read LTPE…LDRL and VSNA…SLSA. Positions 189–205 are enriched in low complexity; sequence PSPCPSAAASTTTAGPG. Disordered regions lie at residues 189–214, 482–513, and 889–913; these read PSPCPSAAASTTTAGPGPLSPSPSPL, EAEQTDKPASRPEAAKPGLPHWLQLSNDQNKA, and EGSHNSSDVSVEQEQEKGQLAVKRS. Basic and acidic residues predominate over residues 482-495; the sequence is EAEQTDKPASRPEA. A compositionally biased stretch (polar residues) spans 891-900; it reads SHNSSDVSVE.

Belongs to the ClpA/ClpB family.

In terms of biological role, may act downstream of MAX2 to negatively regulate karrikins/strigolactone responses. Acts probably specifically in the karrikin pathway. May function in a transcriptional corepressor complex. This Oryza sativa subsp. japonica (Rice) protein is Protein SMAX1-like.